Here is a 919-residue protein sequence, read N- to C-terminus: Isoleucine--tRNA ligase (919 aa).

The 'HIGH' region motif lies at 57–67; sequence PYANGHIHIGT. Glu-553 contacts L-isoleucyl-5'-AMP. A 'KMSKS' region motif is present at residues 594–598; that stretch reads KMSKS. An ATP-binding site is contributed by Lys-597. Residues Cys-887, Cys-890, Cys-907, and Cys-910 each contribute to the Zn(2+) site.

It belongs to the class-I aminoacyl-tRNA synthetase family. IleS type 1 subfamily. Monomer. Zn(2+) serves as cofactor.

It is found in the cytoplasm. The enzyme catalyses tRNA(Ile) + L-isoleucine + ATP = L-isoleucyl-tRNA(Ile) + AMP + diphosphate. In terms of biological role, catalyzes the attachment of isoleucine to tRNA(Ile). As IleRS can inadvertently accommodate and process structurally similar amino acids such as valine, to avoid such errors it has two additional distinct tRNA(Ile)-dependent editing activities. One activity is designated as 'pretransfer' editing and involves the hydrolysis of activated Val-AMP. The other activity is designated 'posttransfer' editing and involves deacylation of mischarged Val-tRNA(Ile). This Thermotoga maritima (strain ATCC 43589 / DSM 3109 / JCM 10099 / NBRC 100826 / MSB8) protein is Isoleucine--tRNA ligase.